The sequence spans 337 residues: Angiopoietin-related protein 7 (337 aa).

A signal peptide spans 1–21 (MLRETWLCVILVAFVSHPVWL). Positions 30–110 (QLKAAGCCEE…DIMQLQAAQT (81 aa)) form a coiled coil. N49 is a glycosylation site (N-linked (GlcNAc...) asparagine). The region spanning 113–334 (QTSADAIYDC…RVEMKIRPEA (222 aa)) is the Fibrinogen C-terminal domain. A disulfide bridge links C122 with C153. N-linked (GlcNAc...) asparagine glycosylation is found at N244 and N258. C276 and C289 are joined by a disulfide. N320 carries N-linked (GlcNAc...) asparagine glycosylation.

As to quaternary structure, homotetramer; disulfide-linked.

It is found in the secreted. In terms of biological role, has a role in the formation and organization of the extracellular matrix. In the eye, it functions as a mediator of dexamethasone-induced matrix deposition in the trabecular meshwork, the tissue responsible for the outflow of the ocular aqueous humor and for the maintenance of intraocular pressure. Is a negative regulator of angiogenesis in the cornea, and plays a major role in maintaining corneal avascularity and transparency. This Mus musculus (Mouse) protein is Angiopoietin-related protein 7 (Angptl7).